Here is a 649-residue protein sequence, read N- to C-terminus: 2-hydroxyacyl-CoA lyase 2 (649 aa).

The chain crosses the membrane as a helical span at residues 2 to 21; the sequence is FHLIPFVVAFLLVFLTWFLI. Thiamine diphosphate is bound at residue glutamate 84. Positions 474 to 554 are thiamine pyrophosphate binding; it reads DFVGSAAYIL…AIGVIGNDAC (81 aa). 2 residues coordinate Mg(2+): aspartate 525 and asparagine 551.

The protein belongs to the TPP enzyme family. Requires Mg(2+) as cofactor. Thiamine diphosphate is required as a cofactor.

It localises to the endoplasmic reticulum membrane. The enzyme catalyses 2-hydroxyoctadecanoyl-CoA = heptadecanal + formyl-CoA. It catalyses the reaction (2R)-hydroxyhexadecanoyl-CoA = pentadecanal + formyl-CoA. Endoplasmic reticulum 2-OH acyl-CoA lyase involved in the cleavage (C1 removal) reaction in the fatty acid alpha-oxydation in a thiamine pyrophosphate (TPP)-dependent manner. Involved in the phytosphingosine degradation pathway. In Xenopus laevis (African clawed frog), this protein is 2-hydroxyacyl-CoA lyase 2 (ilvbl).